The chain runs to 725 residues: MAAHAWPTAALLLLLVDWLLLRPVLPGIFSLLVPEVPLLRVWAVGLSRWAILGLGVRGVLGVTAGARGWLAALQPLVAALGLALPGLASFRKLSAWGALREGDNAGLLHWNSRLDAFVLSYVAALPAAALWHKLGGFWAPSGHKGAGDMLCRMLGFLDSKKGRLHLVLVLLILSCLGEMAIPFFTGRITDWILQDKTAPSFARNMWLMCILTIASTVLEFAGDGIYNITMGHMHSRVHGEVFRAVLHQETGFFLKNPTGSITSRVTEDTSNVCESISDKLNLFLWYLGRGLCLLAFMIWGSFYLTVVTLLSLPLLFLLPRRLGKVYQSLAVKVQESLAKSTQVALEALSAMPTVRSFANEEGEAQKFRQKLEEMKPLNKKEALAYVTEVWTMSVSGMLLKVGILYLGGQLVVRGAVSSGNLVSFVLYQLQFTRAVEVLLSIYPSMQKSVGASEKIFEYLDRTPCSPLSGSLAPLNMKGLVKFQDVSFAYPNHPNVQVLQGLTFTLYPGKVTALVGPNGSGKSTVAALLQNLYQPTGGKVLLDGEPLVQYDHHYLHTQVAAVGQEPLLFGRSFRENIAYGLTRTPTMEEITAVAMESGAHDFISGFPQGYDTEVGETGNQLSGGQRQAVALARALIRKPRLLILDDATSALDAGNQLRVQRLLYESPEWASRTVLLITQQLSLAERAHHILFLKEGSVCEQGTHLQLMERGGCYRSMVEALAAPSD.

The Cytoplasmic segment spans residues 1–8 (MAAHAWPT). A helical transmembrane segment spans residues 9-29 (AALLLLLVDWLLLRPVLPGIF). Residues 30–38 (SLLVPEVPL) lie on the Lumenal side of the membrane. Residues 39–60 (LRVWAVGLSRWAILGLGVRGVL) form a helical membrane-spanning segment. The Cytoplasmic portion of the chain corresponds to 61–67 (GVTAGAR). The chain crosses the membrane as a helical span at residues 68–88 (GWLAALQPLVAALGLALPGLA). Residues 89 to 110 (SFRKLSAWGALREGDNAGLLHW) lie on the Lumenal side of the membrane. Residues 111 to 131 (NSRLDAFVLSYVAALPAAALW) form a helical membrane-spanning segment. The Cytoplasmic portion of the chain corresponds to 132 to 163 (HKLGGFWAPSGHKGAGDMLCRMLGFLDSKKGR). Residues 164-184 (LHLVLVLLILSCLGEMAIPFF) form a helical membrane-spanning segment. Residues 164–447 (LHLVLVLLIL…LLSIYPSMQK (284 aa)) enclose the ABC transmembrane type-1 domain. The Lumenal portion of the chain corresponds to 185-204 (TGRITDWILQDKTAPSFARN). A helical transmembrane segment spans residues 205 to 225 (MWLMCILTIASTVLEFAGDGI). The Cytoplasmic segment spans residues 226–275 (YNITMGHMHSRVHGEVFRAVLHQETGFFLKNPTGSITSRVTEDTSNVCES). Residues 276-296 (ISDKLNLFLWYLGRGLCLLAF) traverse the membrane as a helical segment. Residues 297-305 (MIWGSFYLT) are Lumenal-facing. Residues 306-326 (VVTLLSLPLLFLLPRRLGKVY) form a helical membrane-spanning segment. At 327-395 (QSLAVKVQES…VTEVWTMSVS (69 aa)) the chain is on the cytoplasmic side. The part of the peptide-binding site stretch occupies residues 352–397 (PTVRSFANEEGEAQKFRQKLEEMKPLNKKEALAYVTEVWTMSVSGM). A helical membrane pass occupies residues 396-416 (GMLLKVGILYLGGQLVVRGAV). Over 417–420 (SSGN) the chain is Lumenal. The chain crosses the membrane as a helical span at residues 421–441 (LVSFVLYQLQFTRAVEVLLSI). The tract at residues 430–464 (QFTRAVEVLLSIYPSMQKSVGASEKIFEYLDRTPC) is part of the peptide-binding site. Topologically, residues 442–725 (YPSMQKSVGA…MVEALAAPSD (284 aa)) are cytoplasmic. Residues 480–719 (VKFQDVSFAY…GGCYRSMVEA (240 aa)) enclose the ABC transporter domain. ATP is bound by residues 515–523 (GPNGSGKST), 618–624 (NQLSGGQ), and Gln-678. Ser-522 contributes to the Mg(2+) binding site.

This sequence belongs to the ABC transporter superfamily. ABCB family. MHC peptide exporter (TC 3.A.1.209) subfamily. Heterodimer of TAP1 and TAP2 (TAP1-TAP2). A component of the peptide loading complex (PLC), interacts via TAPBP with MHCI heterodimer; this interaction mediates peptide-MHCI assembly. Interacts with PSMB5 and PSMB8. The cofactor is Mg(2+).

The protein resides in the endoplasmic reticulum membrane. The enzyme catalyses a peptide antigen(in) + ATP + H2O = a peptide antigen(out) + ADP + phosphate + H(+). Its function is as follows. ABC transporter associated with antigen processing. In complex with TAP2 mediates unidirectional translocation of peptide antigens from cytosol to endoplasmic reticulum (ER) for loading onto MHC class I (MHCI) molecules. Uses the chemical energy of ATP to export peptides against the concentration gradient. During the transport cycle alternates between 'inward-facing' state with peptide binding site facing the cytosol to 'outward-facing' state with peptide binding site facing the ER lumen. Peptide antigen binding to ATP-loaded TAP1-TAP2 induces a switch to hydrolysis-competent 'outward-facing' conformation ready for peptide loading onto nascent MHCI molecules. Subsequently ATP hydrolysis resets the transporter to the 'inward facing' state for a new cycle. As a component of the peptide loading complex (PLC), acts as a molecular scaffold essential for peptide-MHCI assembly and antigen presentation. This is Antigen peptide transporter 1 (Tap1) from Rattus norvegicus (Rat).